Here is a 754-residue protein sequence, read N- to C-terminus: Elongation factor G-2, mitochondrial (754 aa).

Residues 63–340 (DKLRNIGISA…GVVSFLPSPN (278 aa)) form the tr-type G domain. Residues 72-79 (AHIDSGKT), 139-143 (DTPGH), and 193-196 (NKLD) each bind GTP.

Belongs to the TRAFAC class translation factor GTPase superfamily. Classic translation factor GTPase family. EF-G/EF-2 subfamily. In terms of tissue distribution, expressed in cotyledons and adult leaves at the same levels.

Its subcellular location is the mitochondrion. It functions in the pathway protein biosynthesis; polypeptide chain elongation. Functionally, mitochondrial GTPase that catalyzes the GTP-dependent ribosomal translocation step during translation elongation. During this step, the ribosome changes from the pre-translocational (PRE) to the post-translocational (POST) state as the newly formed A-site-bound peptidyl-tRNA and P-site-bound deacylated tRNA move to the P and E sites, respectively. Catalyzes the coordinated movement of the two tRNA molecules, the mRNA and conformational changes in the ribosome. This Arabidopsis thaliana (Mouse-ear cress) protein is Elongation factor G-2, mitochondrial (MEFG2).